Consider the following 500-residue polypeptide: Lysine--tRNA ligase (500 aa).

Residues Glu410 and Glu417 each contribute to the Mg(2+) site.

This sequence belongs to the class-II aminoacyl-tRNA synthetase family. Homodimer. The cofactor is Mg(2+).

It is found in the cytoplasm. The enzyme catalyses tRNA(Lys) + L-lysine + ATP = L-lysyl-tRNA(Lys) + AMP + diphosphate. This is Lysine--tRNA ligase from Shewanella denitrificans (strain OS217 / ATCC BAA-1090 / DSM 15013).